Here is a 454-residue protein sequence, read N- to C-terminus: C4-dicarboxylate transport protein (454 aa).

Helical transmembrane passes span 33 to 53 (VQVL…PDIG), 66 to 86 (LVKM…IAGM), 101 to 121 (IYFL…ANLV), 148 to 168 (EQSI…GAFA), 170 to 190 (GDIL…AIVG), 210 to 230 (LVAI…AFTI), 243 to 263 (MLIG…LGAV), 354 to 374 (LLLV…AGFI), and 377 to 397 (AATL…ILGI).

The protein belongs to the dicarboxylate/amino acid:cation symporter (DAACS) (TC 2.A.23) family.

The protein localises to the cell inner membrane. Its function is as follows. Responsible for the transport of dicarboxylates such as succinate, fumarate, and malate from the periplasm across the membrane. The protein is C4-dicarboxylate transport protein of Sinorhizobium medicae (strain WSM419) (Ensifer medicae).